Reading from the N-terminus, the 3326-residue chain is Deoxyribonuclease CdiA (3326 aa).

The tract at residues 36–342 is two-partner system transport domain (TPS); that stretch reads TADGVLTSGG…ARGALTLTGS (307 aa). The interval 343–1396 is FHA-1; sequence YAGAGSLYSD…ITVRTGTLTN (1054 aa). The tract at residues 1397 to 1765 is receptor binding domain (RBD); the sequence is QREGLVVTES…QQLGSPSLTD (369 aa). The segment at 1766–1951 is YP domain; sequence YPLPTSQSGL…LAQADKTNLQ (186 aa). The segment at 1959 to 2097 is periplasmic FHA-1 repeat (pFR); sequence SVSLSAGGDI…AGGPLQLAAG (139 aa). The tract at residues 2125–2660 is FHA-2; sequence QGLVQSTVAS…SNRYDSKQTS (536 aa). The VENN CT cleavage motif motif lies at 3060–3063; the sequence is VENN. The CT domain stretch occupies residues 3060 to 3326; the sequence is VENNSLGDIA…DRNRQIGVIK (267 aa).

In the N-terminal section; belongs to the CdiA toxin family. As to quaternary structure, the C-terminal (CT) domain interacts with cognate CdiI but not non-cognate CdiI from E.coli strain 536 / UPEC.

The protein resides in the target cell. It localises to the target cell cytoplasm. Toxic component of a toxin-immunity protein module, which functions as a cellular contact-dependent growth inhibition (CDI) system. CDI modules allow bacteria to communicate with and inhibit the growth of closely related neighboring bacteria in a contact-dependent fashion. CDI is neutralized by its cognate immunity protein CdiI, but not by non-cognate CdiI from other bacteria. The C-terminal domain (CT) has strong DNase activity; this activity is inhibited by cognate CdiI. Its function is as follows. The CdiA protein is thought to be exported from the cell through the central lumen of CdiB, the other half of its two-partner system (TPS). The TPS domain probably remains associated with CdiB while the FHA-1 domain forms an extended filament with the receptor-binding domain (RBD) at its extremity; in the secretion arrested state the C-terminus of the RBD and YP domains form a hairpin-like structure as the FHA-2, PT and CT domains are periplasmic. The YP domain is probably responsible for this arrest at the point where it re-enters the host cell periplasm. Upon binding to a target cell outer membrane receptor a signal is transmitted to activate secretion. The filament elongates slightly, the rest of CdiA is secreted and the FHA-2 domain becomes stably associated with the target cell's outer membrane where it facilitates entry of the toxic CT domain into the target cell periplasm. From there the toxic CT domain is cleaved and gains access to the target cell cytoplasm via an inner membrane protein. The polypeptide is Deoxyribonuclease CdiA (Dickeya dadantii (strain 3937) (Erwinia chrysanthemi (strain 3937))).